The sequence spans 113 residues: U11-theraphotoxin-Hhn1a (113 aa).

Residues 1–21 form the signal peptide; it reads MNTVRVTFLLVFVLAVSLGQA. Positions 22–74 are excised as a propeptide; it reads DKDENRMVMQEKTEQGKSYLDFAENLLLQKLEELEAKLLEEDSEESRNSRQKR. Disulfide bonds link Cys75–Cys90, Cys82–Cys95, and Cys89–Cys110.

This sequence belongs to the neurotoxin 14 (magi-1) family. 01 (HNTX-16) subfamily. In terms of tissue distribution, expressed by the venom gland.

It is found in the secreted. In terms of biological role, probable ion channel inhibitor. In Cyriopagopus hainanus (Chinese bird spider), this protein is U11-theraphotoxin-Hhn1a.